Here is a 371-residue protein sequence, read N- to C-terminus: S-adenosylmethionine:tRNA ribosyltransferase-isomerase (371 aa).

The protein belongs to the QueA family. As to quaternary structure, monomer.

It localises to the cytoplasm. It carries out the reaction 7-aminomethyl-7-carbaguanosine(34) in tRNA + S-adenosyl-L-methionine = epoxyqueuosine(34) in tRNA + adenine + L-methionine + 2 H(+). It functions in the pathway tRNA modification; tRNA-queuosine biosynthesis. Functionally, transfers and isomerizes the ribose moiety from AdoMet to the 7-aminomethyl group of 7-deazaguanine (preQ1-tRNA) to give epoxyqueuosine (oQ-tRNA). The polypeptide is S-adenosylmethionine:tRNA ribosyltransferase-isomerase (Prochlorococcus marinus (strain MIT 9313)).